The following is a 3176-amino-acid chain: Large tegument protein deneddylase (3176 aa).

Residues 1–12 (MSNGDWGQSQRP) are compositionally biased toward polar residues. The disordered stretch occupies residues 1–28 (MSNGDWGQSQRPRGTGPMRGIRTMDVNA). Residues 1 to 268 (MSNGDWGQSQ…YEANGSGFDL (268 aa)) are deubiquitination activity. One can recognise a Peptidase C76 domain in the interval 41 to 258 (LGTASCNQAH…MLEHYGVYDF (218 aa)). Catalysis depends on residues cysteine 61, aspartate 193, and histidine 195. Positions 319-342 (PAARYSPAKTNSPPPSPASAAPAS) are disordered. 5 consecutive repeat copies span residues 335–339 (PASAA), 340–344 (PASAA), 345–349 (PASAA), 350–354 (PASAA), and 355–359 (PASAA). Residues 335–384 (PASAAPASAAPASAAPASAAPASAAQASVAPASVAPASAAPASAAPDSAA) form a 10 X 5 AA approximate repeats of P-A-S-A-A region. Residues 360–364 (QASVA) form a 6; approximate repeat. Residues 365–369 (PASVA) form a 7; approximate repeat. Tandem repeats lie at residues 370–374 (PASAA) and 375–379 (PASAA). A compositionally biased stretch (low complexity) spans 376-386 (ASAAPDSAAPA). Disordered stretches follow at residues 376–683 (ASAA…GSGL), 928–950 (LLSGGDQEGEEGGGEPEDHSIYR), 1170–1193 (APISPASPSATPANHDNPEATPPL), 1435–1461 (LMETGRKEKEKLREQEDKERRERRARE), 2610–3008 (GLVS…PGAR), and 3023–3043 (TYTVQKEAPPSAASQLPKMPK). A 10; approximate repeat occupies 380–384 (PDSAA). The segment covering 457–488 (PRPPVPPHRPPSAARLPPPVIPIPHQSPPASP) has biased composition (pro residues). The span at 519–546 (AAPSNPEIPLTTPSPSPTAAAAPTATTL) shows a compositional bias: low complexity. Residues 579 to 636 (APSPLLPQQQPPPSAAPAPSPLLPQQQPPPSAARAPSPLPPQQQPLPSATPAPPPAQQ) show a composition bias toward pro residues. Residues 581–611 (SPLLPQQQPPPSAAPAPSPLLPQQQPPPSAA) form an interaction with inner tegument protein region. Residues 1170–1182 (APISPASPSATPA) are compositionally biased toward low complexity. Over residues 2619–2630 (SADNTPASSDRL) the composition is skewed to polar residues. Over residues 2643-2654 (EGSTTAESEASG) the composition is skewed to low complexity. Positions 2738–2747 (QPAPQQPPSS) are enriched in pro residues. Composition is skewed to polar residues over residues 2761–2772 (SPHSTPSTASGS) and 2811–2831 (SAASLTTFGLQPQDTQASSQD). Residues 2839 to 2854 (MQREKKQQGGREEAAE) show a composition bias toward basic and acidic residues. Low complexity-rich tracts occupy residues 2872 to 2886 (APVVAAGAAASATPA) and 2901 to 2912 (APALGSGLAAPA).

This sequence belongs to the herpesviridae large tegument protein family. Interacts with host CUL1 and CUL4A; these interactions inhibit the E3 ligase activity of cullins. Interacts with inner tegument protein. Interacts with capsid vertex specific component CVC2. Interacts with the major capsid protein/MCP. Interacts with host TRIM25 and YWHAZ.

It localises to the virion tegument. Its subcellular location is the host cytoplasm. The protein resides in the host nucleus. The enzyme catalyses Thiol-dependent hydrolysis of ester, thioester, amide, peptide and isopeptide bonds formed by the C-terminal Gly of ubiquitin (a 76-residue protein attached to proteins as an intracellular targeting signal).. In terms of biological role, large tegument protein that plays multiple roles in the viral cycle. During viral entry, remains associated with the capsid while most of the tegument is detached and participates in the capsid transport toward the host nucleus. Plays a role in the routing of the capsid at the nuclear pore complex and subsequent uncoating. Within the host nucleus, acts as a deneddylase and promotes the degradation of nuclear CRLs (cullin-RING ubiquitin ligases) and thereby stabilizes nuclear CRL substrates, while cytoplasmic CRLs remain unaffected. These modifications prevent host cell cycle S-phase progression and create a favorable environment allowing efficient viral genome replication. Participates later in the secondary envelopment of capsids. Indeed, plays a linker role for the association of the outer viral tegument to the capsids together with the inner tegument protein. Counteracts host TLR-mediated NF-kappa-B activation through both MYD88 and TICAM1-dependent pathways by interfering with 'Lys-63'- and 'Lys-48'-linked ubiquitination of signaling intermediates such as TRAF6 and IKBKG. Inhibits type I interferon production by forming a tri-molecular complex with host TRIM25 and 14-3-3 thereby promoting TRIM25 autoubiquitination and sequestration of the ligase into inactive protein aggregates. In turn, host RIGI is recruited to the complex but ubiquitination is severely impaired leading to inhibition of the pathway. Also catalyzes the removal of 'Lys-48'- and 'Lys-63'-linked ubiquitin chains on host TBK1 and STING1 suppressing cGAS-STING signaling in addition to the RIGI-MAVS pathway. Inhibits selective autophagy by deubiquitinating host SQSTM1. In turn, decreased SQSTM1 ubiquitination fails to recruit LC3 to SQSTM1-positive aggregates. In the host nucleus, deubiquitinates topoisomerase II subunits TOP2A and TOP2B thereby stabilizing SUMOylated TOP2 which halts the DNA damage response to TOP2-induced double strand DNA breaks and promotes cell survival. The chain is Large tegument protein deneddylase from Homo sapiens (Human).